We begin with the raw amino-acid sequence, 380 residues long: Lipid-A-disaccharide synthase (380 aa).

The protein belongs to the LpxB family.

It catalyses the reaction a lipid X + a UDP-2-N,3-O-bis[(3R)-3-hydroxyacyl]-alpha-D-glucosamine = a lipid A disaccharide + UDP + H(+). Its pathway is bacterial outer membrane biogenesis; LPS lipid A biosynthesis. Condensation of UDP-2,3-diacylglucosamine and 2,3-diacylglucosamine-1-phosphate to form lipid A disaccharide, a precursor of lipid A, a phosphorylated glycolipid that anchors the lipopolysaccharide to the outer membrane of the cell. This is Lipid-A-disaccharide synthase from Photobacterium profundum (strain SS9).